The following is a 233-amino-acid chain: Phosphoribosylformylglycinamidine synthase subunit PurQ (233 aa).

A Glutamine amidotransferase type-1 domain is found at 9–233 (RIGIVTFPGS…LSGFLSAFSS (225 aa)). Catalysis depends on Cys-92, which acts as the Nucleophile. Residues His-201 and Glu-203 contribute to the active site.

As to quaternary structure, part of the FGAM synthase complex composed of 1 PurL, 1 PurQ and 2 PurS subunits.

Its subcellular location is the cytoplasm. It catalyses the reaction N(2)-formyl-N(1)-(5-phospho-beta-D-ribosyl)glycinamide + L-glutamine + ATP + H2O = 2-formamido-N(1)-(5-O-phospho-beta-D-ribosyl)acetamidine + L-glutamate + ADP + phosphate + H(+). The catalysed reaction is L-glutamine + H2O = L-glutamate + NH4(+). It participates in purine metabolism; IMP biosynthesis via de novo pathway; 5-amino-1-(5-phospho-D-ribosyl)imidazole from N(2)-formyl-N(1)-(5-phospho-D-ribosyl)glycinamide: step 1/2. Its function is as follows. Part of the phosphoribosylformylglycinamidine synthase complex involved in the purines biosynthetic pathway. Catalyzes the ATP-dependent conversion of formylglycinamide ribonucleotide (FGAR) and glutamine to yield formylglycinamidine ribonucleotide (FGAM) and glutamate. The FGAM synthase complex is composed of three subunits. PurQ produces an ammonia molecule by converting glutamine to glutamate. PurL transfers the ammonia molecule to FGAR to form FGAM in an ATP-dependent manner. PurS interacts with PurQ and PurL and is thought to assist in the transfer of the ammonia molecule from PurQ to PurL. The protein is Phosphoribosylformylglycinamidine synthase subunit PurQ of Frankia casuarinae (strain DSM 45818 / CECT 9043 / HFP020203 / CcI3).